Consider the following 699-residue polypeptide: Elongation factor G (699 aa).

The region spanning 10–292 (DRTRNIGIMA…AVIDYLPSPT (283 aa)) is the tr-type G domain. Residues 19-26 (AHIDAGKT), 90-94 (DTPGH), and 144-147 (NKMD) contribute to the GTP site.

It belongs to the TRAFAC class translation factor GTPase superfamily. Classic translation factor GTPase family. EF-G/EF-2 subfamily.

The protein localises to the cytoplasm. In terms of biological role, catalyzes the GTP-dependent ribosomal translocation step during translation elongation. During this step, the ribosome changes from the pre-translocational (PRE) to the post-translocational (POST) state as the newly formed A-site-bound peptidyl-tRNA and P-site-bound deacylated tRNA move to the P and E sites, respectively. Catalyzes the coordinated movement of the two tRNA molecules, the mRNA and conformational changes in the ribosome. The protein is Elongation factor G of Coxiella burnetii (strain Dugway 5J108-111).